Here is a 447-residue protein sequence, read N- to C-terminus: Ribosomal protein uS12 methylthiotransferase RimO (447 aa).

One can recognise an MTTase N-terminal domain in the interval 15-125 (PRVGFVSLGC…VMQAIHRHLP (111 aa)). The [4Fe-4S] cluster site is built by Cys-24, Cys-60, Cys-89, Cys-156, Cys-160, and Cys-163. Residues 142–379 (LTPKHYAYLK…MQWQEEISKK (238 aa)) enclose the Radical SAM core domain. The TRAM domain maps to 379-447 (KRLAGKKGRI…GIHDLWAKKI (69 aa)).

The protein belongs to the methylthiotransferase family. RimO subfamily. It depends on [4Fe-4S] cluster as a cofactor.

The protein resides in the cytoplasm. The catalysed reaction is L-aspartate(89)-[ribosomal protein uS12]-hydrogen + (sulfur carrier)-SH + AH2 + 2 S-adenosyl-L-methionine = 3-methylsulfanyl-L-aspartate(89)-[ribosomal protein uS12]-hydrogen + (sulfur carrier)-H + 5'-deoxyadenosine + L-methionine + A + S-adenosyl-L-homocysteine + 2 H(+). Catalyzes the methylthiolation of an aspartic acid residue of ribosomal protein uS12. The protein is Ribosomal protein uS12 methylthiotransferase RimO of Nitrosomonas europaea (strain ATCC 19718 / CIP 103999 / KCTC 2705 / NBRC 14298).